We begin with the raw amino-acid sequence, 326 residues long: Acetyl-coenzyme A carboxylase carboxyl transferase subunit alpha (326 aa).

In terms of domain architecture, CoA carboxyltransferase C-terminal spans 44-298; sequence KLETRAMQLR…KQALLDNLDE (255 aa).

It belongs to the AccA family. As to quaternary structure, acetyl-CoA carboxylase is a heterohexamer composed of biotin carboxyl carrier protein (AccB), biotin carboxylase (AccC) and two subunits each of ACCase subunit alpha (AccA) and ACCase subunit beta (AccD).

It localises to the cytoplasm. It catalyses the reaction N(6)-carboxybiotinyl-L-lysyl-[protein] + acetyl-CoA = N(6)-biotinyl-L-lysyl-[protein] + malonyl-CoA. It participates in lipid metabolism; malonyl-CoA biosynthesis; malonyl-CoA from acetyl-CoA: step 1/1. Its function is as follows. Component of the acetyl coenzyme A carboxylase (ACC) complex. First, biotin carboxylase catalyzes the carboxylation of biotin on its carrier protein (BCCP) and then the CO(2) group is transferred by the carboxyltransferase to acetyl-CoA to form malonyl-CoA. The protein is Acetyl-coenzyme A carboxylase carboxyl transferase subunit alpha of Trichormus variabilis (strain ATCC 29413 / PCC 7937) (Anabaena variabilis).